An 89-amino-acid polypeptide reads, in one-letter code: Small ribosomal subunit protein uS17 (89 aa).

This sequence belongs to the universal ribosomal protein uS17 family. In terms of assembly, part of the 30S ribosomal subunit.

One of the primary rRNA binding proteins, it binds specifically to the 5'-end of 16S ribosomal RNA. This chain is Small ribosomal subunit protein uS17, found in Bdellovibrio bacteriovorus (strain ATCC 15356 / DSM 50701 / NCIMB 9529 / HD100).